A 184-amino-acid polypeptide reads, in one-letter code: Probable chemoreceptor glutamine deamidase CheD (184 aa).

It belongs to the CheD family.

The enzyme catalyses L-glutaminyl-[protein] + H2O = L-glutamyl-[protein] + NH4(+). In terms of biological role, probably deamidates glutamine residues to glutamate on methyl-accepting chemotaxis receptors (MCPs), playing an important role in chemotaxis. The chain is Probable chemoreceptor glutamine deamidase CheD from Rhizobium rhizogenes (strain K84 / ATCC BAA-868) (Agrobacterium radiobacter).